The sequence spans 673 residues: uncharacterized protein (673 aa).

The first 24 residues, 1-24 (MKIHNIIKIIIVVCLEGFALTSFA), serve as a signal peptide directing secretion. The next 6 helical transmembrane spans lie at 224–244 (NAIG…MVLN), 253–273 (IALF…LGPL), 410–430 (IILI…LYFI), 436–456 (CMIT…MMLF), 469–489 (VSLS…LLIT), and 562–582 (VVSI…FYYF). The interval 624-673 (AQATQGKPPSSGDMPGDGGSKRSEGQKGDDSFISSGGNSSGDSLSSSGGK) is disordered. Basic and acidic residues predominate over residues 642 to 653 (GSKRSEGQKGDD). Residues 654–673 (SFISSGGNSSGDSLSSSGGK) show a composition bias toward low complexity.

It belongs to the TrbL/VirB6 family.

It is found in the cell membrane. This is an uncharacterized protein from Rickettsia bellii (strain RML369-C).